We begin with the raw amino-acid sequence, 329 residues long: MAAKQMEEIQKKLRLLSYPRANAPAQSLLFAGMERYALLEWLFFKLLGDKSPFSQQNLQGDAGVRDEETVRIQYLAEIAKFLGITPTVDIEAIQGHGTYEDRMEMLRNIVDLVEASLFSDNQEWSIDEQVAKDIQLIDAIAERQSLIFSEECKLFPADVQIQSIYPLPDVSELETKLSEQAKILSNLQQKVDDLAAKHAYNPDEEYTEVESQLRARLESFLETARAFNTIYTKEIRPWTHMMEVPQLHGFGPAANRLLEAYNMLLKFLGNLKNLRDSHAALSIGSSGTVAGEPSSVTRIVSDCEAALTVLNRDLGILSASIAREQGERL.

A coiled-coil region spans residues 169–197 (DVSELETKLSEQAKILSNLQQKVDDLAAK).

In terms of assembly, part of the augmin complex composed of 8 subunits. The complex acts on microtubules and interacts with gamma-tubulin in spindles and the phragmoplast.

The protein localises to the cytoplasm. It is found in the cytoskeleton. Its subcellular location is the spindle. It localises to the phragmoplast. Functionally, contributes to the assembly of the acentrosomal spindle and phragmoplast microtubule arrays as part of the augmin complex. Regulates the association of gamma-tubulin with the spindle and phragmoplast microtubules. In Arabidopsis thaliana (Mouse-ear cress), this protein is AUGMIN subunit 7.